Reading from the N-terminus, the 284-residue chain is 2-dehydro-3-deoxyphosphooctonate aldolase (284 aa).

It belongs to the KdsA family.

Its subcellular location is the cytoplasm. It carries out the reaction D-arabinose 5-phosphate + phosphoenolpyruvate + H2O = 3-deoxy-alpha-D-manno-2-octulosonate-8-phosphate + phosphate. Its pathway is carbohydrate biosynthesis; 3-deoxy-D-manno-octulosonate biosynthesis; 3-deoxy-D-manno-octulosonate from D-ribulose 5-phosphate: step 2/3. It functions in the pathway bacterial outer membrane biogenesis; lipopolysaccharide biosynthesis. In Vibrio vulnificus (strain CMCP6), this protein is 2-dehydro-3-deoxyphosphooctonate aldolase.